A 456-amino-acid chain; its full sequence is Chromosomal replication initiator protein DnaA (456 aa).

Residues 1 to 83 (MTASLWQQCL…LRFDIGNRPH (83 aa)) form a domain I, interacts with DnaA modulators region. Positions 83–119 (HPVAVARAPARGADPVNNSQKSWESKAEAKPEPNHKS) are domain II. Residues 92–122 (ARGADPVNNSQKSWESKAEAKPEPNHKSNTN) are disordered. The segment covering 105–117 (WESKAEAKPEPNH) has biased composition (basic and acidic residues). Residues 120 to 336 (NTNVNYTFEN…GALNRVIANA (217 aa)) form a domain III, AAA+ region region. The ATP site is built by glycine 164, glycine 166, lysine 167, and threonine 168. The segment at 337 to 456 (NFTGRAINID…YSNLIRTLSS (120 aa)) is domain IV, binds dsDNA.

The protein belongs to the DnaA family. Oligomerizes as a right-handed, spiral filament on DNA at oriC.

It is found in the cytoplasm. Functionally, plays an essential role in the initiation and regulation of chromosomal replication. ATP-DnaA binds to the origin of replication (oriC) to initiate formation of the DNA replication initiation complex once per cell cycle. Binds the DnaA box (a 9 base pair repeat at the origin) and separates the double-stranded (ds)DNA. Forms a right-handed helical filament on oriC DNA; dsDNA binds to the exterior of the filament while single-stranded (ss)DNA is stabiized in the filament's interior. The ATP-DnaA-oriC complex binds and stabilizes one strand of the AT-rich DNA unwinding element (DUE), permitting loading of DNA polymerase. After initiation quickly degrades to an ADP-DnaA complex that is not apt for DNA replication. Binds acidic phospholipids. The sequence is that of Chromosomal replication initiator protein DnaA from Aeromonas hydrophila subsp. hydrophila (strain ATCC 7966 / DSM 30187 / BCRC 13018 / CCUG 14551 / JCM 1027 / KCTC 2358 / NCIMB 9240 / NCTC 8049).